A 214-amino-acid polypeptide reads, in one-letter code: MSESRLVVALDLTDKDRALEIARSIGRQVFAIKINWPLVLAGSGSIIGEIARVSRVVCDFKIADIPNTNSIIAKFARDQGAWGIISHSFTGLESLRSVVEASGDTKVFSVVAMSHPGSDLINDNYRKLMDISERAGVYGYIAPGNKLSDLSEIRKRTKKTIMSPGIGSQGGRASDAIKAGADLVIVGRSIYESADPVTAAEAINEEIAKAVEQN.

Substrate-binding positions include D11, K33, D59–T68, S114, P164–S174, G187, and R188. Catalysis depends on K61, which acts as the Proton donor.

This sequence belongs to the OMP decarboxylase family. Type 1 subfamily. Homodimer.

It carries out the reaction orotidine 5'-phosphate + H(+) = UMP + CO2. The protein operates within pyrimidine metabolism; UMP biosynthesis via de novo pathway; UMP from orotate: step 2/2. In terms of biological role, catalyzes the decarboxylation of orotidine 5'-monophosphate (OMP) to uridine 5'-monophosphate (UMP). This chain is Orotidine 5'-phosphate decarboxylase, found in Thermoplasma acidophilum (strain ATCC 25905 / DSM 1728 / JCM 9062 / NBRC 15155 / AMRC-C165).